Consider the following 474-residue polypeptide: Aspartyl/glutamyl-tRNA(Asn/Gln) amidotransferase subunit B (474 aa).

This sequence belongs to the GatB/GatE family. GatB subfamily. As to quaternary structure, heterotrimer of A, B and C subunits.

The catalysed reaction is L-glutamyl-tRNA(Gln) + L-glutamine + ATP + H2O = L-glutaminyl-tRNA(Gln) + L-glutamate + ADP + phosphate + H(+). It carries out the reaction L-aspartyl-tRNA(Asn) + L-glutamine + ATP + H2O = L-asparaginyl-tRNA(Asn) + L-glutamate + ADP + phosphate + 2 H(+). Its function is as follows. Allows the formation of correctly charged Asn-tRNA(Asn) or Gln-tRNA(Gln) through the transamidation of misacylated Asp-tRNA(Asn) or Glu-tRNA(Gln) in organisms which lack either or both of asparaginyl-tRNA or glutaminyl-tRNA synthetases. The reaction takes place in the presence of glutamine and ATP through an activated phospho-Asp-tRNA(Asn) or phospho-Glu-tRNA(Gln). The chain is Aspartyl/glutamyl-tRNA(Asn/Gln) amidotransferase subunit B from Limosilactobacillus reuteri (strain DSM 20016) (Lactobacillus reuteri).